The primary structure comprises 142 residues: Profilin (142 aa).

It belongs to the profilin family. As to quaternary structure, occurs in many kinds of cells as a complex with monomeric actin in a 1:1 ratio. As to expression, expressed specifically in coelomocytes in response to injury.

It is found in the cytoplasm. The protein localises to the cytoskeleton. Functionally, binds to actin and affects the structure of the cytoskeleton. At high concentrations, profilin prevents the polymerization of actin, whereas it enhances it at low concentrations. By binding to PIP2, it inhibits the formation of IP3 and DG. The polypeptide is Profilin (Strongylocentrotus purpuratus (Purple sea urchin)).